A 5801-amino-acid chain; its full sequence is uncharacterized protein (5801 aa).

Disordered regions lie at residues 1114 to 1136 (DDDNNNSNNNNNNNNNNNNNKKI), 1827 to 1846 (KDRSSSSSSSYSGGGSSINN), 2040 to 2109 (NNGE…SPLF), 3351 to 3392 (EKSN…NNSG), 5134 to 5168 (DNNNNNNNNNNNNNNNNNNNIDHGDDNNDGESESD), 5478 to 5573 (ISDP…EDII), and 5600 to 5638 (HDKDEEQPEKPQQQEIHQQPEKPQQPEKPQELQSTETPG). Composition is skewed to low complexity over residues 1118–1134 (NNSNNNNNNNNNNNNNK), 1831–1846 (SSSSSSYSGGGSSINN), 2048–2096 (QQLQ…QQQQ), 3353–3392 (SNNNNNNNNNDNSGNNSGNEIDGSSNGDNNNNNNNNNNSG), and 5135–5153 (NNNNNNNNNNNNNNNNNNN). Positions 5496-5573 (DNEEEEEDDD…EDEDEDEDII (78 aa)) are enriched in acidic residues. The span at 5617–5629 (QQPEKPQQPEKPQ) shows a compositional bias: basic and acidic residues.

This is an uncharacterized protein from Dictyostelium discoideum (Social amoeba).